The chain runs to 545 residues: Glutamine-dependent NAD(+) synthetase (545 aa).

The CN hydrolase domain occupies 5–247 (LRIAMAQFDF…DQWLVVDYMR (243 aa)). The Proton acceptor; for glutaminase activity role is filled by Glu-46. Lys-113 functions as the For glutaminase activity in the catalytic mechanism. L-glutamine is bound at residue Tyr-119. Cys-151 serves as the catalytic Nucleophile; for glutaminase activity. Residues Ser-177 and Lys-183 each coordinate L-glutamine. Positions 269–545 (VWRAVVRGVQ…RYPISNAYRG (277 aa)) are ligase. 292–299 (GLSGGIDS) contacts ATP. Asn-375 is a deamido-NAD(+) binding site. An ATP-binding site is contributed by Thr-399. Deamido-NAD(+) contacts are provided by Glu-404 and Lys-516.

It in the C-terminal section; belongs to the NAD synthetase family.

The enzyme catalyses deamido-NAD(+) + L-glutamine + ATP + H2O = L-glutamate + AMP + diphosphate + NAD(+) + H(+). It functions in the pathway cofactor biosynthesis; NAD(+) biosynthesis; NAD(+) from deamido-NAD(+) (L-Gln route): step 1/1. Catalyzes the ATP-dependent amidation of deamido-NAD to form NAD. Uses L-glutamine as a nitrogen source. The protein is Glutamine-dependent NAD(+) synthetase of Xylella fastidiosa (strain 9a5c).